Reading from the N-terminus, the 2115-residue chain is Non-reducing polyketide synthase ascC (2115 aa).

The tract at residues 1-21 (MTLIQTKHSASAAVFSPQSTA) is disordered. The N-terminal acylcarrier protein transacylase domain (SAT) stretch occupies residues 14–260 (VFSPQSTAPK…HNSRNTELAQ (247 aa)). One can recognise a Ketosynthase family 3 (KS3) domain in the interval 381 to 805 (PDSIAIVGSA…GSNSALICSE (425 aa)). Residues cysteine 553, histidine 689, and histidine 728 each act as for beta-ketoacyl synthase activity in the active site. Positions 908–1210 (LTFSGQSRTT…ANPSAHTFQA (303 aa)) are malonyl-CoA:ACP transacylase (MAT) domain. The active-site For acyl/malonyl transferase activity is serine 995. Residues 1280–1406 (PKKVQQLVTL…GDFFATSGEM (127 aa)) form an N-terminal hotdog fold region. Residues 1280 to 1581 (PKKVQQLVTL…FMRIKAAKLE (302 aa)) form the PKS/mFAS DH domain. The product template (PT) domain stretch occupies residues 1285-1580 (QLVTLKKTEG…QFMRIKAAKL (296 aa)). Histidine 1315 (proton acceptor; for dehydratase activity) is an active-site residue. Positions 1428–1581 (DAERLRTATA…FMRIKAAKLE (154 aa)) are C-terminal hotdog fold. Aspartate 1492 serves as the catalytic Proton donor; for dehydratase activity. The segment at 1587-1624 (ANPGSKTKSTNGNALPSVPRSVPAGPTSAPQQVAPTTM) is disordered. Residues 1588-1600 (NPGSKTKSTNGNA) are compositionally biased toward polar residues. Residues 1640 to 1724 (PSKIADLKSL…PTAALTEGLV (85 aa)) form the Carrier domain. Serine 1674 is subject to O-(pantetheine 4'-phosphoryl)serine. Positions 1734–1748 (SDSIRNSTGFHTTIP) are enriched in polar residues. Residues 1734–1767 (SDSIRNSTGFHTTIPATPAELHSNPPDSLDGSTV) form a disordered region. A thioesterase (TE) domain region spans residues 1777 to 2107 (ARFKLDTMVY…YDFLLGELEN (331 aa)). Active-site for thioesterase activity residues include serine 1897 and aspartate 2045.

It catalyses the reaction 3 malonyl-CoA + acetyl-CoA + 2 H(+) = orsellinate + 3 CO2 + 4 CoA. Its pathway is secondary metabolite biosynthesis; terpenoid biosynthesis. In terms of biological role, non-reducing polyketide synthase; part of the asc-1 gene cluster that mediates the biosynthesis of both ascochlorin and ascofuranone, a strong inhibitor of cyanide-insensitive alternative oxidases and a promising drug candidate against African trypanosomiasis. The first step in the pathway is performed by the non-reducing polyketide synthase ascC that produces orsellinic acid by condensing acetyl-CoA with 3 malonyl-CoA units. Orsellinic acid is then prenylated by the prenyltransferase ascA to yield ilicicolinic acid B. Ilicicolinic acid B is further reduced to ilicicolin B by the reductase ascB. The halogenase ascD then chlorinates ilicicolin B to produce ilicicolin A which is converted to ilicicolin A epoxide by the cytochrome P450 monooxygenase ascE that catalyzes stereoselective epoxidation of the terminal double bond of the prenyl group. Ilicicolin A epoxide is the last common precursor for the biosynthesis of ascofuranone and ascochlorin. The terpene cyclase ascF produces a monocyclic terpene, and the cyclization reaction is proposed to be initiated by protonation of the terminal epoxide of ilicicolin A epoxide to generate a monocyclic tertiarycation, which is followed by a series of hydride and methyl shifts with abstraction of proton, leading to the formation of the (14S,15R,19R)-trimethylcyclohexanone ring structure of ilicicolin C, which is finally reduced to ascochlorin by the dehydrogenase ascG. On the other hand, ilicicolin A epoxide is hydroxylated by the cytochrome P450 monooxygenase ascH, and the resultant product is cyclized by the terpene cyclase ascI to ascofuranol via protonation-initiated epoxide ring opening, which facilitates the 6-endo-tet cyclization to form the tetrahy-drofuran ring. Finally, ascofuranol is oxidized into ascofuranone by ascJ. This chain is Non-reducing polyketide synthase ascC, found in Acremonium egyptiacum (Oospora egyptiaca).